We begin with the raw amino-acid sequence, 219 residues long: Small ribosomal subunit protein uS3 (219 aa).

A KH type-2 domain is found at 41-110 (IRKIINTEYS…DVSINICEVK (70 aa)).

Belongs to the universal ribosomal protein uS3 family. Part of the 30S ribosomal subunit. Forms a tight complex with proteins S10 and S14.

In terms of biological role, binds the lower part of the 30S subunit head. Binds mRNA in the 70S ribosome, positioning it for translation. This chain is Small ribosomal subunit protein uS3, found in Orientia tsutsugamushi (strain Ikeda) (Rickettsia tsutsugamushi).